Here is a 612-residue protein sequence, read N- to C-terminus: Cytoplasmic dynein 1 intermediate chain 2 (612 aa).

Basic and acidic residues-rich tracts occupy residues 1 to 13 (MSDK…ELER) and 20 to 43 (QIRE…KKEA). 2 disordered regions span residues 1-117 (MSDK…MAKI) and 129-188 (TYTK…EEKQ). Ser2 bears the N-acetylserine mark. The residue at position 51 (Ser51) is a Diphosphoserine. Phosphoserine is present on residues Ser51 and Ser84. Low complexity predominate over residues 82–91 (PSSKSVSTPS). A Phosphothreonine modification is found at Thr89. Ser91, Ser95, and Ser98 each carry phosphoserine. The span at 164–188 (EKTLKKDEESDSKAPPHELTEEEKQ) shows a compositional bias: basic and acidic residues. 7 WD repeats span residues 251 to 300 (SKHR…TTPE), 304 to 344 (HCQS…RTPV), 353 to 394 (AHTH…HPQD), 403 to 443 (SKAV…AGIS), 448 to 493 (GHQG…PLYS), 496 to 536 (DNSD…EVPT), and 542 to 581 (EGNP…AVPR).

This sequence belongs to the dynein intermediate chain family. Homodimer. The cytoplasmic dynein 1 complex consists of two catalytic heavy chains (HCs) and a number of non-catalytic subunits presented by intermediate chains (ICs), light intermediate chains (LICs) and light chains (LCs); the composition seems to vary in respect to the IC, LIC and LC composition. The heavy chain homodimer serves as a scaffold for the probable homodimeric assembly of the respective non-catalytic subunits. The ICs and LICs bind directly to the HC dimer and the LCs assemble on the IC dimer. Interacts with DYNLT3. Interacts with DYNLT1. Interacts (dephosphorylated at Ser-84) with DCTN1. Interacts with BICD2. Interacts with SPEF2. Interacts with CFAP61. Post-translationally, the phosphorylation status of Ser-84 appears to be involved in dynactin-dependent target binding. In terms of processing, pyrophosphorylation by 5-diphosphoinositol pentakisphosphate (5-IP7) promotes interaction with DCTN1. Serine pyrophosphorylation is achieved by Mg(2+)-dependent, but enzyme independent transfer of a beta-phosphate from a inositol pyrophosphate to a pre-phosphorylated serine residue.

The protein localises to the cytoplasm. It is found in the cytoskeleton. Acts as one of several non-catalytic accessory components of the cytoplasmic dynein 1 complex that are thought to be involved in linking dynein to cargos and to adapter proteins that regulate dynein function. Cytoplasmic dynein 1 acts as a motor for the intracellular retrograde motility of vesicles and organelles along microtubules. The intermediate chains mediate the binding of dynein to dynactin via its 150 kDa component (p150-glued) DCTN1. Involved in membrane-transport, such as Golgi apparatus, late endosomes and lysosomes. This chain is Cytoplasmic dynein 1 intermediate chain 2 (DYNC1I2), found in Bos taurus (Bovine).